A 108-amino-acid chain; its full sequence is Holo-[acyl-carrier-protein] synthase (108 aa).

Residues Asp9 and Glu54 each contribute to the Mg(2+) site.

The protein belongs to the P-Pant transferase superfamily. AcpS family. Mg(2+) serves as cofactor.

It localises to the cytoplasm. It carries out the reaction apo-[ACP] + CoA = holo-[ACP] + adenosine 3',5'-bisphosphate + H(+). Functionally, transfers the 4'-phosphopantetheine moiety from coenzyme A to a Ser of acyl-carrier-protein. In Mycoplasmopsis pulmonis (strain UAB CTIP) (Mycoplasma pulmonis), this protein is Holo-[acyl-carrier-protein] synthase.